Here is a 92-residue protein sequence, read N- to C-terminus: MEKSDRRSEESHLWIPLQCLDQTLRAILKCLGLFHQDSPTTSSPGTSKQPKEEKEDVTMEKEEVVVTSRATKVKAKQRGKEKVSSGRPGQHN.

Positions 1–69 (MEKSDRRSEE…EKEEVVVTSR (69 aa)) are excised as a propeptide. The disordered stretch occupies residues 35–92 (HQDSPTTSSPGTSKQPKEEKEDVTMEKEEVVVTSRATKVKAKQRGKEKVSSGRPGQHN). Over residues 37–48 (DSPTTSSPGTSK) the composition is skewed to polar residues. Over residues 49–64 (QPKEEKEDVTMEKEEV) the composition is skewed to basic and acidic residues.

It belongs to the brassicaceae elicitor peptide family. In terms of assembly, interacts with its receptor PEPR1.

Elicitor of plant defense. Induces the production of plant defensin (PDF1.2) and of H(2)O(2). Promotes resistance to the root fungal pathogen P.irregulare. Triggers the expression of several PROSCOOP genes (e.g. PROSCOOP2, PROSCOOP7, PROSCOOP8, PROSCOOP12 and PROSCOOP13). In Arabidopsis thaliana (Mouse-ear cress), this protein is Precursor of elicitor peptide 1.